The chain runs to 375 residues: MPRPISITVDLDAIRQNFAYANALGVNALESSINDRQSNTLAVIKADAYGHGAVATARALNGQAALLAVSSIEEAVSLRQHHIKTPILLLEGCFCPSELSVVNELNLQIVIHNQKQIEDLLAQVLTKPIKVWLKVDTGMHRLGIPVSDALKAYTQLASSKNVCSVMLMTHFATSDHPDHPLLLSQIQSIQKLAEKVSAEPSYAGCSLANSAALLATPKSISTWNRPGIMLYGISPFNQSDINVLPLIPAMTFSSKVIALRRVATGESVGYGAIWTAKRPSIIATVAAGYGDGYPRTAKSGTPVMVNGQIAPLAGRVSMDMLCVDVTQLTDISEGSPVELWGKNIPVNDVAAWADTLGYELVTRMPTRAKRVFINE.

The active-site Proton acceptor; specific for D-alanine is the Lys-45. An N6-(pyridoxal phosphate)lysine modification is found at Lys-45. Arg-141 is a substrate binding site. Tyr-270 acts as the Proton acceptor; specific for L-alanine in catalysis. Position 318 (Met-318) interacts with substrate.

The protein belongs to the alanine racemase family. Pyridoxal 5'-phosphate is required as a cofactor.

It catalyses the reaction L-alanine = D-alanine. Its pathway is amino-acid biosynthesis; D-alanine biosynthesis; D-alanine from L-alanine: step 1/1. In terms of biological role, catalyzes the interconversion of L-alanine and D-alanine. May also act on other amino acids. In Pseudoalteromonas atlantica (strain T6c / ATCC BAA-1087), this protein is Alanine racemase (alr).